The sequence spans 162 residues: Glycine cleavage system H protein, mitochondrial (162 aa).

Residues 1–31 (MALRMWASSTANALRLSSATRPHFSPLSRCF) constitute a mitochondrion transit peptide. A Lipoyl-binding domain is found at 53–135 (VATIGITDHA…YEDGWMIKVK (83 aa)). Position 94 is an N6-lipoyllysine (lysine 94).

It belongs to the GcvH family. In terms of assembly, the glycine cleavage system is composed of four proteins: P, T, L and H. The cofactor is (R)-lipoate.

It localises to the mitochondrion. Its function is as follows. The glycine cleavage system catalyzes the degradation of glycine. The H protein shuttles the methylamine group of glycine from the P protein to the T protein. The sequence is that of Glycine cleavage system H protein, mitochondrial (GDCSH) from Flaveria anomala (Yellowtops).